We begin with the raw amino-acid sequence, 291 residues long: Ubiquinone biosynthesis protein COQ4, mitochondrial (291 aa).

A mitochondrion-targeting transit peptide spans Met-1–Asn-37. Zn(2+) is bound by residues His-169, Asp-170, His-173, and Glu-185. Over residues Pro-271 to Ser-283 the composition is skewed to basic and acidic residues. The tract at residues Pro-271–Tyr-291 is disordered.

The protein belongs to the COQ4 family. As to quaternary structure, component of a multi-subunit COQ enzyme complex, composed of at least COQ3, COQ4, COQ5, COQ6, COQ7 and COQ9. It depends on Zn(2+) as a cofactor.

The protein resides in the mitochondrion inner membrane. It carries out the reaction a 4-hydroxy-3-methoxy-5-(all-trans-polyprenyl)benzoate + H(+) = a 2-methoxy-6-(all-trans-polyprenyl)phenol + CO2. It participates in cofactor biosynthesis; ubiquinone biosynthesis. Lyase that catalyzes the C1-decarboxylation of 4-hydroxy-3-methoxy-5-(all-trans-polyprenyl)benzoic acid into 2-methoxy-6-(all-trans-polyprenyl)phenol during ubiquinone biosynthesis. This is Ubiquinone biosynthesis protein COQ4, mitochondrial from Coprinopsis cinerea (strain Okayama-7 / 130 / ATCC MYA-4618 / FGSC 9003) (Inky cap fungus).